The primary structure comprises 134 residues: Phosphomevalonate dehydratase small subunit (134 aa).

Serine 62 serves as the catalytic Proton acceptor.

The protein belongs to the AcnX type II small subunit family. In terms of assembly, heterodimer composed of a large subunit (PMDh-L) and a small subunit (PMDh-S).

It carries out the reaction (R)-5-phosphomevalonate = (2E)-3-methyl-5-phosphooxypent-2-enoate + H2O. Its pathway is isoprenoid biosynthesis; isopentenyl diphosphate biosynthesis via mevalonate pathway. Its function is as follows. Component of a hydro-lyase that catalyzes the dehydration of mevalonate 5-phosphate (MVA5P) to form trans-anhydromevalonate 5-phosphate (tAHMP). Involved in the archaeal mevalonate (MVA) pathway, which provides fundamental precursors for isoprenoid biosynthesis, such as isopentenyl diphosphate (IPP) and dimethylallyl diphosphate (DMAPP). The protein is Phosphomevalonate dehydratase small subunit of Pyrococcus furiosus (strain ATCC 43587 / DSM 3638 / JCM 8422 / Vc1).